The chain runs to 341 residues: L-threonine 3-dehydrogenase (341 aa).

Cys38 lines the Zn(2+) pocket. Catalysis depends on charge relay system residues Thr40 and His43. The Zn(2+) site is built by His63, Glu64, Cys93, Cys96, Cys99, and Cys107. NAD(+)-binding positions include Ile175, Asp195, Arg200, 262 to 264 (LGI), and 286 to 287 (IY).

It belongs to the zinc-containing alcohol dehydrogenase family. In terms of assembly, homotetramer. The cofactor is Zn(2+).

Its subcellular location is the cytoplasm. The catalysed reaction is L-threonine + NAD(+) = (2S)-2-amino-3-oxobutanoate + NADH + H(+). It functions in the pathway amino-acid degradation; L-threonine degradation via oxydo-reductase pathway; glycine from L-threonine: step 1/2. In terms of biological role, catalyzes the NAD(+)-dependent oxidation of L-threonine to 2-amino-3-ketobutyrate. The protein is L-threonine 3-dehydrogenase of Salmonella typhi.